Consider the following 451-residue polypeptide: Gamma-aminobutyric acid receptor subunit alpha-2 (451 aa).

Residues 1-28 (MKTKLNIYNMQLLLFVFLVWDPARLVLA) form the signal peptide. Residues 29 to 249 (NIQEDEAKNN…MTAHFHLKRK (221 aa)) are Extracellular-facing. Asparagine 38 is a glycosylation site (N-linked (GlcNAc...) asparagine). Position 94 (arginine 94) interacts with 4-aminobutanoate. Asparagine 138 carries N-linked (GlcNAc...) asparagine glycosylation. Threonine 157 provides a ligand contact to 4-aminobutanoate. An intrachain disulfide couples cysteine 166 to cysteine 180. Residues 250–270 (IGYFVIQTYLPCIMTVILSQV) form a helical membrane-spanning segment. Topologically, residues 271–280 (SFWLNRESVP) are cytoplasmic. A helical transmembrane segment spans residues 281–300 (ARTVFGVTTVLTMTTLSISA). Topologically, residues 301–311 (RNSLPKVAYAT) are extracellular. A helical membrane pass occupies residues 312–332 (AMDWFIAVCYAFVFSALIEFA). The Cytoplasmic segment spans residues 333 to 420 (TVNYFTKRGW…FNSVSKIDRM (88 aa)). Residues 421-441 (SRIVFPVLFGTFNLVYWATYL) traverse the membrane as a helical segment. Topologically, residues 442–451 (NREPVLGVSP) are extracellular.

This sequence belongs to the ligand-gated ion channel (TC 1.A.9) family. Gamma-aminobutyric acid receptor (TC 1.A.9.5) subfamily. GABRA2 sub-subfamily. As to quaternary structure, heteropentamer, formed by a combination of alpha (GABRA1-6), beta (GABRB1-3), gamma (GABRG1-3), delta (GABRD), epsilon (GABRE), rho (GABRR1-3), pi (GABRP) and theta (GABRQ) subunits, each subunit exhibiting distinct physiological and pharmacological properties. Interacts with UBQLN1. Interacts with KIF21B. Interacts with LHFPL4. Interacts with SHISA7; interaction leads to the regulation of GABA(A) receptor trafficking, channel deactivation kinetics and pharmacology. Post-translationally, glycosylated.

It is found in the postsynaptic cell membrane. The protein localises to the cell membrane. The protein resides in the cytoplasmic vesicle membrane. It localises to the cell projection. Its subcellular location is the dendrite. It carries out the reaction chloride(in) = chloride(out). Its activity is regulated as follows. Activated by pentobarbital. Inhibited by the antagonist bicuculline. Functionally, alpha subunit of the heteropentameric ligand-gated chloride channel gated by gamma-aminobutyric acid (GABA), a major inhibitory neurotransmitter in the brain. GABA-gated chloride channels, also named GABA(A) receptors (GABAAR), consist of five subunits arranged around a central pore and contain GABA active binding site(s) located at the alpha and beta subunit interface(s). When activated by GABA, GABAARs selectively allow the flow of chloride anions across the cell membrane down their electrochemical gradient. Chloride influx into the postsynaptic neuron following GABAAR opening decreases the neuron ability to generate a new action potential, thereby reducing nerve transmission. The alpha-2 subunit exhibits synaptogenic activity together with beta-2 and very little to no activity together with beta-3, the gamma-2 subunit being necessary but not sufficient to induce rapid synaptic contacts formation. The chain is Gamma-aminobutyric acid receptor subunit alpha-2 (GABRA2) from Pongo abelii (Sumatran orangutan).